The primary structure comprises 185 residues: ATP-dependent protease subunit HslV (185 aa).

Thr-12 is an active-site residue. Na(+)-binding residues include Ala-168, Cys-171, and Thr-174.

The protein belongs to the peptidase T1B family. HslV subfamily. In terms of assembly, a double ring-shaped homohexamer of HslV is capped on each side by a ring-shaped HslU homohexamer. The assembly of the HslU/HslV complex is dependent on binding of ATP.

The protein localises to the cytoplasm. It carries out the reaction ATP-dependent cleavage of peptide bonds with broad specificity.. Allosterically activated by HslU binding. Functionally, protease subunit of a proteasome-like degradation complex believed to be a general protein degrading machinery. This Cereibacter sphaeroides (strain KD131 / KCTC 12085) (Rhodobacter sphaeroides) protein is ATP-dependent protease subunit HslV.